Reading from the N-terminus, the 533-residue chain is Protein mono-ADP-ribosyltransferase PARP3 (533 aa).

Residues 1-30 (MAPKRKASVQTEGSKKRRQGTEEEDSFRST) are disordered. Lysine 6 is subject to N6-(ADP-ribosyl)lysine. Position 12 is an ADP-ribosyl glutamic acid (glutamate 12). The short motif at 14–18 (SKKRR) is the Nuclear localization signal element. ADP-ribosyl glutamic acid occurs at positions 24 and 32. Residues 57–147 (GIQVHEDYDC…DRFVAQPNKY (91 aa)) form the WGR domain. Aspartate 138 carries the ADP-ribosyl aspartic acid modification. 4 positions are modified to ADP-ribosyl glutamic acid: glutamate 160, glutamate 230, glutamate 309, and glutamate 310. The 119-residue stretch at 181–299 (PCSLDPATQN…DIELAQTLQA (119 aa)) folds into the PARP alpha-helical domain. In terms of domain architecture, PARP catalytic spans 313–533 (HPLDRDYQLL…RLRYLLEIHL (221 aa)).

The protein belongs to the ARTD/PARP family. In terms of assembly, interacts with PARP1; leading to activate PARP1 in absence of DNA. Interacts with PRKDC. Interacts with XRCC5/Ku80; the interaction is dependent on nucleic acids. Interacts with XRCC6/Ku70; the interaction is dependent on nucleic acids. Interacts with EZH2, HDAC1, HDAC2, SUZ12, YY1, LRIG3 and LIG4. In terms of processing, auto-ADP-ribosylated.

The protein localises to the nucleus. The protein resides in the chromosome. It is found in the cytoplasm. It localises to the cytoskeleton. Its subcellular location is the microtubule organizing center. The protein localises to the centrosome. The protein resides in the centriole. The catalysed reaction is L-aspartyl-[protein] + NAD(+) = 4-O-(ADP-D-ribosyl)-L-aspartyl-[protein] + nicotinamide. It carries out the reaction L-glutamyl-[protein] + NAD(+) = 5-O-(ADP-D-ribosyl)-L-glutamyl-[protein] + nicotinamide. The enzyme catalyses L-lysyl-[protein] + NAD(+) = N(6)-(ADP-D-ribosyl)-L-lysyl-[protein] + nicotinamide + H(+). In terms of biological role, mono-ADP-ribosyltransferase that mediates mono-ADP-ribosylation of target proteins and plays a key role in the response to DNA damage. Mediates mono-ADP-ribosylation of glutamate, aspartate or lysine residues on target proteins. In contrast to PARP1 and PARP2, it is not able to mediate poly-ADP-ribosylation. Involved in DNA repair by mediating mono-ADP-ribosylation of a limited number of acceptor proteins involved in chromatin architecture and in DNA metabolism, such as histone H2B, XRCC5 and XRCC6. ADP-ribosylation follows DNA damage and appears as an obligatory step in a detection/signaling pathway leading to the reparation of DNA strand breaks. Involved in single-strand break repair by catalyzing mono-ADP-ribosylation of histone H2B on 'Glu-2' (H2BE2ADPr) of nucleosomes containing nicked DNA. Cooperates with the XRCC5-XRCC6 (Ku80-Ku70) heterodimer to limit end-resection thereby promoting accurate NHEJ. Suppresses G-quadruplex (G4) structures in response to DNA damage. Associates with a number of DNA repair factors and is involved in the response to exogenous and endogenous DNA strand breaks. Together with APLF, promotes the retention of the LIG4-XRCC4 complex on chromatin and accelerate DNA ligation during non-homologous end-joining (NHEJ). May link the DNA damage surveillance network to the mitotic fidelity checkpoint. Acts as a negative regulator of immunoglobulin class switch recombination, probably by controlling the level of AICDA /AID on the chromatin. In addition to proteins, also able to ADP-ribosylate DNA: mediates DNA mono-ADP-ribosylation of DNA strand break termini via covalent addition of a single ADP-ribose moiety to a 5'- or 3'-terminal phosphate residues in DNA containing multiple strand breaks. This is Protein mono-ADP-ribosyltransferase PARP3 from Mus musculus (Mouse).